A 95-amino-acid polypeptide reads, in one-letter code: MSDPITYNPGAVADFATDVASRAGQLQSIFDDTSNRTHALQEFFAGHGASGFFEAQAQMLSGLQGLIDTIRQHGQTTSHVLDSAISTDQHIAGLF.

It belongs to the WXG100 family. ESAT-6 subfamily.

The protein localises to the secreted. This Mycolicibacterium paratuberculosis (strain ATCC BAA-968 / K-10) (Mycobacterium paratuberculosis) protein is ESAT-6-like protein EsxC.